Reading from the N-terminus, the 659-residue chain is MPLNKLIQDGDNQDLTDERFKATFDTDALAAVFHGGEDALKRIRELRDEVTKRWHLFDALPGAHRTRAERMEDVSRKLKNLMESVGEFADFTNNLDMLVIIRDVMGIEGFPLALHNLMFVPTIQNQADDEQTEWWLMDALQGKIIGTYAQTELGHGTNLGAIETTATYDKLTEEFIIHTPTTTATKWWPGGLGTSCTHVVLVANLIIDTKNYGLHPFFVPIRDRNSYSVMSGVRVGDIGTKMGVNCVDNGFLAFDNYRIPRRNMLMKHSKVSKEGLYTAPSHPKVGYTTMLYMRSEMIYHQAYYLAMAMAISIRYSAVRRQGEIKPGTQEVQILDYQTQQYRIFPGLARCFAFNTAAATVRQMTENCIKQLSHGNSDVLADLHALSCGLKAVVTHQASQSIDQARQACGGHGYSDASYLPTLYTCSVGACTYEGENMVMLLQLSKYLMKAAAKAEKGEEMAPLVAYLVKPDITETNDKFAKMLSHFEHIARHRVMHAYRQMIEEEKQGIERDYAFANHSVDWTKAARAHTKLFIARGFVKSVQEVSDEAVHDVLTTLAELYLSYELIEMSADLTANGYLSESDVQQIRHQIYDSMRKTRRNAVSIVDSFDICDRELRSVLGRRDGHVYENLYKWAQMSPLNERNLPHVEKYLKPMTSKL.

FAD contacts are provided by residues 148–151 (YAQT), 156–157 (GT), and Gly190. Substrate contacts are provided by residues 284–287 (KVGY) and Arg294. FAD contacts are provided by residues Arg319 and 339-342 (QQYR). ATP contacts are provided by His395 and Gln403. FAD is bound at residue Gly410. Substrate is bound at residue 432 to 433 (YE). Glu433 (proton acceptor) is an active-site residue. Glu435 contacts FAD. 524 to 527 (KAAR) is a binding site for ATP. Residues 657 to 659 (SKL) carry the Microbody targeting signal motif.

Belongs to the acyl-CoA oxidase family. As to quaternary structure, homodimer. Requires FAD as cofactor.

Its subcellular location is the peroxisome. It participates in lipid metabolism; peroxisomal fatty acid beta-oxidation. Activated by ATP. ATP binding leads to a conformational change that promotes FAD cofactor binding and enzyme activity. ATP binding likely occurs during acox-1.5 folding and/or dimer formation. Functionally, involved in the first step of peroxisomal beta-oxidation by catalyzing the desaturation of fatty acid-derived side chains. This Caenorhabditis elegans protein is Probable acyl-coenzyme A oxidase acox-1.5.